Here is a 2278-residue protein sequence, read N- to C-terminus: Protein Ycf2 (2278 aa).

This sequence belongs to the Ycf2 family.

It is found in the plastid. The protein resides in the chloroplast stroma. The protein localises to the chromoplast stroma. Functionally, probable ATPase of unknown function. Its presence in a non-photosynthetic plant (Epifagus virginiana) and experiments in tobacco indicate that it has an essential function which is probably not related to photosynthesis. The sequence is that of Protein Ycf2 (ycf2-A) from Solanum lycopersicum (Tomato).